Reading from the N-terminus, the 426-residue chain is D-tagatose-1,6-bisphosphate aldolase subunit KbaZ (426 aa).

The protein belongs to the GatZ/KbaZ family. KbaZ subfamily. In terms of assembly, forms a complex with KbaY.

The protein operates within carbohydrate metabolism; D-tagatose 6-phosphate degradation; D-glyceraldehyde 3-phosphate and glycerone phosphate from D-tagatose 6-phosphate: step 2/2. In terms of biological role, component of the tagatose-1,6-bisphosphate aldolase KbaYZ that is required for full activity and stability of the Y subunit. Could have a chaperone-like function for the proper and stable folding of KbaY. When expressed alone, KbaZ does not show any aldolase activity. This chain is D-tagatose-1,6-bisphosphate aldolase subunit KbaZ, found in Escherichia coli O17:K52:H18 (strain UMN026 / ExPEC).